The sequence spans 216 residues: 3-isopropylmalate dehydratase small subunit (216 aa).

It belongs to the LeuD family. LeuD type 1 subfamily. Heterodimer of LeuC and LeuD.

It carries out the reaction (2R,3S)-3-isopropylmalate = (2S)-2-isopropylmalate. Its pathway is amino-acid biosynthesis; L-leucine biosynthesis; L-leucine from 3-methyl-2-oxobutanoate: step 2/4. Its function is as follows. Catalyzes the isomerization between 2-isopropylmalate and 3-isopropylmalate, via the formation of 2-isopropylmaleate. The protein is 3-isopropylmalate dehydratase small subunit of Polaromonas naphthalenivorans (strain CJ2).